The primary structure comprises 279 residues: Oxygen-dependent coproporphyrinogen-III oxidase (279 aa).

S102 serves as a coordination point for substrate. Positions 106 and 116 each coordinate a divalent metal cation. The active-site Proton donor is the H116. Position 118–120 (118–120 (NTR)) interacts with substrate. H149 and H179 together coordinate a divalent metal cation. The segment at 244–279 (YVEFNLLYDRGTKFGLMTDGNVEAILMSLPPEVKWA) is important for dimerization.

This sequence belongs to the aerobic coproporphyrinogen-III oxidase family. Homodimer. Requires a divalent metal cation as cofactor.

The protein resides in the cytoplasm. It carries out the reaction coproporphyrinogen III + O2 + 2 H(+) = protoporphyrinogen IX + 2 CO2 + 2 H2O. It functions in the pathway porphyrin-containing compound metabolism; protoporphyrin-IX biosynthesis; protoporphyrinogen-IX from coproporphyrinogen-III (O2 route): step 1/1. In terms of biological role, involved in the heme biosynthesis. Catalyzes the aerobic oxidative decarboxylation of propionate groups of rings A and B of coproporphyrinogen-III to yield the vinyl groups in protoporphyrinogen-IX. The sequence is that of Oxygen-dependent coproporphyrinogen-III oxidase from Rickettsia bellii (strain RML369-C).